We begin with the raw amino-acid sequence, 96 residues long: Citrate lyase acyl carrier protein (96 aa).

Ser-14 bears the O-(phosphoribosyl dephospho-coenzyme A)serine mark.

Belongs to the CitD family. In terms of assembly, oligomer with a subunit composition of (alpha,beta,gamma)6.

The protein resides in the cytoplasm. Covalent carrier of the coenzyme of citrate lyase. This chain is Citrate lyase acyl carrier protein, found in Pectobacterium carotovorum subsp. carotovorum (strain PC1).